A 90-amino-acid chain; its full sequence is Small ribosomal subunit protein uS15c (90 aa).

This sequence belongs to the universal ribosomal protein uS15 family. Part of the 30S ribosomal subunit.

It localises to the plastid. Its subcellular location is the chloroplast. In Manihot esculenta (Cassava), this protein is Small ribosomal subunit protein uS15c (rps15).